The primary structure comprises 101 residues: MSRKSVIQRNLKRISICNRLKNKREELKAIIKDQSISMNDRFLAQVKLSKLPRDSSYIRIRNRCLITGRPRGCYRKFKVSRIVLRQLGSIGQIPGLTKSSW.

It belongs to the universal ribosomal protein uS14 family. Part of the 30S ribosomal subunit. Contacts proteins S3 and S10.

Its function is as follows. Binds 16S rRNA, required for the assembly of 30S particles and may also be responsible for determining the conformation of the 16S rRNA at the A site. The protein is Small ribosomal subunit protein uS14 of Ehrlichia chaffeensis (strain ATCC CRL-10679 / Arkansas).